Here is a 299-residue protein sequence, read N- to C-terminus: Probable lipid kinase YegS (299 aa).

The DAGKc domain occupies 2–133 (ADLPASLLIL…IDIAQVNKET (132 aa)). Residues T40, 66 to 72 (GDGTINE), and T95 each bind ATP. Mg(2+) contacts are provided by L215, D218, and L220. E271 acts as the Proton acceptor in catalysis.

This sequence belongs to the diacylglycerol/lipid kinase family. YegS lipid kinase subfamily. Mg(2+) is required as a cofactor. Ca(2+) serves as cofactor.

The protein localises to the cytoplasm. In terms of biological role, probably phosphorylates lipids; the in vivo substrate is unknown. This chain is Probable lipid kinase YegS, found in Escherichia fergusonii (strain ATCC 35469 / DSM 13698 / CCUG 18766 / IAM 14443 / JCM 21226 / LMG 7866 / NBRC 102419 / NCTC 12128 / CDC 0568-73).